A 252-amino-acid chain; its full sequence is CLAVATA3/ESR (CLE)-related protein 4A-1 (252 aa).

The N-terminal stretch at 1–21 is a signal peptide; sequence MAKNAMLCLLILRVVLALAFA. A required for secretion from the host cytoplasm to the host apoplasm region spans residues 21–83; sequence ATNKKGDEEP…SNQLPNNNWM (63 aa). Residue N32 is glycosylated (N-linked (GlcNAc...) asparagine). The interval 116–252 is disordered; sequence RKTGMHSQRH…APAGPDPIHH (137 aa). Composition is skewed to basic and acidic residues over residues 125-137 and 144-242; these read HHEETTLEQEKRV and PIHH…EKRG. An A-1 repeat occupies 127-135; sequence EETTLEQEK. The segment at 127-219 is 6 X approximate repeat A; the sequence is EETTLEQEKR…HEETTLEQEK (93 aa). Residues 136–147 form a CLE-1 repeat; the sequence is RVAGAGPDPIHH. The tract at residues 136–252 is 6 X approximate repeat CLE; sequence RVAGAGPDPI…APAGPDPIHH (117 aa). The A-2 repeat unit spans residues 148–156; the sequence is QDTTLEQEK. One copy of the CLE-2 repeat lies at 157–168; it reads RAVPAGPDPKHH. The A-3 repeat unit spans residues 169 to 177; the sequence is EETTLEQEK. Residues 178–189 form a CLE-3 repeat; sequence RAVPAGPDPKHH. An A-4 repeat occupies 190–198; it reads EETTLEQEK. The CLE-4 repeat unit spans residues 199-210; it reads RAVPAGPDPKHH. The stretch at 211 to 219 is one A-5 repeat; the sequence is EETTLEQEK. One copy of the CLE-5 repeat lies at 220 to 231; it reads RAVPAGPDPKHH. An A-6 repeat occupies 232–240; sequence EETTFEQEK. Residues 241–252 form a CLE-6 repeat; sequence RGAPAGPDPIHH.

It belongs to the CLV3/ESR signal peptide family. Highly expressed exclusively within the dorsal esophageal gland cell during syncytium formation in host plants.

The protein resides in the secreted. The protein localises to the host cytoplasm. It localises to the host extracellular space. Its subcellular location is the extracellular space. It is found in the apoplast. Its function is as follows. Mimics host plant CLE extracellular signal peptides that regulate cell fate. May play a role in the differentiation or division of feeding cells (syncytia) induced in plant roots during infection. This chain is CLAVATA3/ESR (CLE)-related protein 4A-1 (CLE-4A-1), found in Globodera rostochiensis (Golden nematode worm).